Consider the following 66-residue polypeptide: Large ribosomal subunit protein bL28 (66 aa).

The protein belongs to the bacterial ribosomal protein bL28 family.

The polypeptide is Large ribosomal subunit protein bL28 (Oenococcus oeni (strain ATCC BAA-331 / PSU-1)).